Reading from the N-terminus, the 549-residue chain is Cilia- and flagella-associated protein 45 (549 aa).

Residues 1–29 (MPLSPAGVLSSTSTASNRSRNRPRYRTKA) form a disordered region. 3 coiled-coil regions span residues 119–232 (REEL…MMEV), 259–393 (IVEQ…KRNQ), and 434–522 (AVQV…KIEE). The segment at 388-416 (RAKRNQEVADREWRRKEKENAQKKMETEA) is disordered.

This sequence belongs to the CFAP45 family. As to quaternary structure, microtubule inner protein component of sperm flagellar doublet microtubules. Interacts with AK8; dimerization with AK8 may create a cavity at the interface of the dimer that can accommodate AMP. Interacts with CFAP52. Interacts with ENKUR. Directly interacts with DNALI1. Interacts with DNAH11. Interacts with DNAI1. As to expression, expressed in respiratory cells (at protein level).

It localises to the cytoplasm. It is found in the cytoskeleton. The protein resides in the cilium axoneme. Its subcellular location is the flagellum axoneme. The protein localises to the cell projection. It localises to the cilium. It is found in the flagellum. Functionally, microtubule inner protein (MIP) part of the dynein-decorated doublet microtubules (DMTs) in cilia axoneme, which is required for motile cilia beating. It is an AMP-binding protein that may facilitate dynein ATPase-dependent ciliary and flagellar beating via adenine nucleotide homeostasis. May function as a donor of AMP to AK8 and hence promote ADP production. The sequence is that of Cilia- and flagella-associated protein 45 (CFAP45) from Sus scrofa (Pig).